A 522-amino-acid polypeptide reads, in one-letter code: Major facilitator-type transporter sorT (522 aa).

The tract at residues 1–21 is disordered; it reads MSHTEPKAPVNTGEVENGHLY. The next 12 helical transmembrane spans lie at 52–72, 89–109, 121–141, 143–163, 183–203, 211–231, 280–300, 324–344, 366–386, 395–415, 427–447, and 457–477; these read WFIAAIATLSVFAVTFTSSAY, VFIVGLSLFVLGFAIGPAVWA, QILWIITHIAMVAFLGGSAGS, NVATLLILRFFAGTFGGSPLV, TIYCVAPFLGPILGPIVGGFV, WVQGVCVIFIGVVGILGIVFI, WIFLFLEPIVLIASVYMAIIY, IGGLAFLGIAVGIIFGLVYAI, LPPAIVGGVALPIGMFAFAWT, VSIILSAPFGFGCVLVILPIM, ASVLAAAAIFRSVVGAVFPLF, and IHWASSIPAFLTLLCMPFPLI.

Belongs to the major facilitator superfamily. Sugar transporter (TC 2.A.1.1) family.

Its subcellular location is the membrane. In terms of biological role, major facilitator-type transporter; part of the gene cluster that mediates the biosynthesis of sorbicillinoids, a diverse group of yellow secondary metabolites that restrict growth of competing pathogenic fungi but not of bacteria. The protein is Major facilitator-type transporter sorT of Penicillium rubens (strain ATCC 28089 / DSM 1075 / NRRL 1951 / Wisconsin 54-1255) (Penicillium chrysogenum).